A 354-amino-acid polypeptide reads, in one-letter code: Probable L-ascorbate-6-phosphate lactonase UlaG (354 aa).

Belongs to the UlaG family. A divalent metal cation is required as a cofactor.

The protein localises to the cytoplasm. It catalyses the reaction L-ascorbate 6-phosphate + H2O = 3-dehydro-L-gulonate 6-phosphate. It participates in cofactor degradation; L-ascorbate degradation; D-xylulose 5-phosphate from L-ascorbate: step 1/4. Functionally, probably catalyzes the hydrolysis of L-ascorbate-6-P into 3-keto-L-gulonate-6-P. Is essential for L-ascorbate utilization under anaerobic conditions. This chain is Probable L-ascorbate-6-phosphate lactonase UlaG, found in Escherichia coli O127:H6 (strain E2348/69 / EPEC).